Reading from the N-terminus, the 135-residue chain is P2Y purinoceptor 4 (135 aa).

The chain crosses the membrane as a helical span at residues 1–25; that stretch reads VHFSSSVMVLLFGLPFLVTLVCYGL. Over 26 to 49 the chain is Cytoplasmic; sequence MALRLCRPLPGAGQSSSRLRSLRT. A helical membrane pass occupies residues 50-72; that stretch reads IAVVMTVFAVCLVPFHITRTIYY. The Extracellular segment spans residues 73 to 90; the sequence is LARLLKADCQILNIVNVV. The chain crosses the membrane as a helical span at residues 91–112; that stretch reads YKVTRPLASANSCLDPLLYLFT. At 113 to 135 the chain is on the cytoplasmic side; that stretch reads GDKYRHQLQRLCRVSAPQRRITA.

Belongs to the G-protein coupled receptor 1 family. In terms of tissue distribution, expressed in brain, heart, stria vascularis and vestibular labyrinth.

It localises to the cell membrane. Functionally, receptor for ATP and UTP coupled to G-proteins that activate a phosphatidylinositol-calcium second messenger system. Not activated by UDP. The chain is P2Y purinoceptor 4 (P2RY4) from Meriones unguiculatus (Mongolian jird).